Consider the following 198-residue polypeptide: Probable GTP-binding protein EngB (198 aa).

An EngB-type G domain is found at 22 to 195 (DLPEIALAGR…WKAIHKFTKT (174 aa)). Residues 30–37 (GRSNVGKS), 57–61 (GKTQT), 75–78 (DVPG), 142–145 (TKAD), and 174–176 (FSS) contribute to the GTP site. Positions 37 and 59 each coordinate Mg(2+).

It belongs to the TRAFAC class TrmE-Era-EngA-EngB-Septin-like GTPase superfamily. EngB GTPase family. Mg(2+) serves as cofactor.

Functionally, necessary for normal cell division and for the maintenance of normal septation. The protein is Probable GTP-binding protein EngB of Bacillus anthracis (strain A0248).